The sequence spans 88 residues: Small ribosomal subunit protein eS21 (88 aa).

It belongs to the eukaryotic ribosomal protein eS21 family. As to quaternary structure, component of the small ribosomal subunit. Mature ribosomes consist of a small (40S) and a large (60S) subunit. The 40S subunit contains about 33 different proteins and 1 molecule of RNA (18S). The 60S subunit contains about 49 different proteins and 3 molecules of RNA (25S, 5.8S and 5S).

The protein resides in the cytoplasm. Required for the processing of the 20S rRNA-precursor to mature 18S rRNA in a late step of the maturation of 40S ribosomal subunits. Has a physiological role leading to 18S rRNA stability. The polypeptide is Small ribosomal subunit protein eS21 (rps21) (Aspergillus fumigatus (strain ATCC MYA-4609 / CBS 101355 / FGSC A1100 / Af293) (Neosartorya fumigata)).